The chain runs to 260 residues: Cytochrome c oxidase subunit 3 (260 aa).

6 consecutive transmembrane segments (helical) span residues 41–61 (LTLV…RDII), 81–101 (GMIL…WAFF), 133–153 (TGVL…ILAG), 161–181 (ALFL…WEYI), 196–216 (FFVA…FLMV), and 238–258 (AWYW…IYWW).

It belongs to the cytochrome c oxidase subunit 3 family. In terms of assembly, component of the cytochrome c oxidase (complex IV, CIV), a multisubunit enzyme composed of a catalytic core of 3 subunits and several supernumerary subunits. The complex exists as a monomer or a dimer and forms supercomplexes (SCs) in the inner mitochondrial membrane with ubiquinol-cytochrome c oxidoreductase (cytochrome b-c1 complex, complex III, CIII).

The protein resides in the mitochondrion inner membrane. The catalysed reaction is 4 Fe(II)-[cytochrome c] + O2 + 8 H(+)(in) = 4 Fe(III)-[cytochrome c] + 2 H2O + 4 H(+)(out). In terms of biological role, component of the cytochrome c oxidase, the last enzyme in the mitochondrial electron transport chain which drives oxidative phosphorylation. The respiratory chain contains 3 multisubunit complexes succinate dehydrogenase (complex II, CII), ubiquinol-cytochrome c oxidoreductase (cytochrome b-c1 complex, complex III, CIII) and cytochrome c oxidase (complex IV, CIV), that cooperate to transfer electrons derived from NADH and succinate to molecular oxygen, creating an electrochemical gradient over the inner membrane that drives transmembrane transport and the ATP synthase. Cytochrome c oxidase is the component of the respiratory chain that catalyzes the reduction of oxygen to water. Electrons originating from reduced cytochrome c in the intermembrane space (IMS) are transferred via the dinuclear copper A center (CU(A)) of subunit 2 and heme A of subunit 1 to the active site in subunit 1, a binuclear center (BNC) formed by heme A3 and copper B (CU(B)). The BNC reduces molecular oxygen to 2 water molecules using 4 electrons from cytochrome c in the IMS and 4 protons from the mitochondrial matrix. This chain is Cytochrome c oxidase subunit 3 (COIII), found in Strongylocentrotus purpuratus (Purple sea urchin).